A 442-amino-acid chain; its full sequence is Syndecan-3 (442 aa).

2 disordered regions span residues 1–24 (MKPG…AAAG) and 57–87 (RPVD…SGYF). At 1-387 (MKPGPPHRAG…SILERKEVLV (387 aa)) the chain is on the extracellular side. Positions 13–24 (HGAGAGAGAAAG) are enriched in gly residues. Over residues 63-77 (GSGDDDSFPDDELDD) the composition is skewed to acidic residues. Residues S80, S82, S84, and S91 are each glycosylated (O-linked (Xyl...) (glycosaminoglycan) serine). O-linked (GalNAc) serine; by GALNT13 glycosylation occurs at S108. Residues T109 and T110 are each glycosylated (O-linked (GalNAc) threonine; by GALNT13). Disordered regions lie at residues 150-173 (EEPS…STGD), 225-326 (TTPE…ETTQ), and 340-367 (AAKA…AIDS). 3 stretches are compositionally biased toward low complexity: residues 156–173 (ATTV…STGD), 225–238 (TTPE…TAAV), and 275–286 (TLPLGTTAPGPT). O-linked (GalNAc) serine; by GALNT13 glycosylation occurs at S160. 3 O-linked (GalNAc) threonine; by GALNT13 glycosylation sites follow: T161, T162, and T169. Residue S170 is glycosylated (O-linked (GalNAc) serine; by GALNT13). O-linked (GalNAc) threonine; by GALNT13 glycosylation is present at T171. A compositionally biased stretch (polar residues) spans 288 to 299 (VAQTPTPETFLT). Residues S314 and S367 are each glycosylated (O-linked (Xyl...) (glycosaminoglycan) serine). A helical membrane pass occupies residues 388-408 (AVIVGGVVGALFAAFLVTLLI). Phosphotyrosine is present on residues Y409, Y419, Y431, and Y441. The Cytoplasmic portion of the chain corresponds to 409–442 (YRMKKKDEGSYTLEEPKQASVTYQKPDKQEEFYA). Residues 419–442 (YTLEEPKQASVTYQKPDKQEEFYA) are disordered. Residues 433-442 (KPDKQEEFYA) show a composition bias toward basic and acidic residues.

Belongs to the syndecan proteoglycan family. As to quaternary structure, interacts with TIAM1. Interacts with PTN (via heparan sulfate chains); this interaction mediates the neurite outgrowth-promoting signal from PTN to the cytoskeleton of growing neurites; this interaction mediates osteoblast recruitment. Interacts with MDK; this interaction induces SDC3 clustering; this interaction induces neuronal cell adhesion and neurite outgrowth. O-glycosylated within the Thr/Ser-rich region which could interact with lectin domains on other molecules. Expressed in the nervous system, the adrenal gland, and the spleen.

It localises to the cell membrane. Its function is as follows. Cell surface proteoglycan that may bear heparan sulfate. May have a role in the organization of cell shape by affecting the actin cytoskeleton, possibly by transferring signals from the cell surface in a sugar-dependent mechanism. The polypeptide is Syndecan-3 (SDC3) (Homo sapiens (Human)).